A 101-amino-acid polypeptide reads, in one-letter code: RNA-binding protein Hfq (101 aa).

The Sm domain maps to 9-68; the sequence is DPFLNALRRERVPVSIYLVNGIKLQGQIESFDQFVILLKNTVSQMVYKHAISTVVPSRPV. The interval 63–101 is disordered; it reads VPSRPVSHHNNNPSGGSSNYHHGSTPASQPSQPESDDAE. The span at 70 to 86 shows a compositional bias: low complexity; it reads HHNNNPSGGSSNYHHGS.

It belongs to the Hfq family. As to quaternary structure, homohexamer.

RNA chaperone that binds small regulatory RNA (sRNAs) and mRNAs to facilitate mRNA translational regulation in response to envelope stress, environmental stress and changes in metabolite concentrations. Also binds with high specificity to tRNAs. This chain is RNA-binding protein Hfq, found in Sodalis glossinidius (strain morsitans).